Here is a 200-residue protein sequence, read N- to C-terminus: Holliday junction branch migration complex subunit RuvA (200 aa).

A domain I region spans residues 1 to 63; it reads MYAYVKGKLT…EDAQLLYGFS (63 aa). Residues 64–142 form a domain II region; that stretch reads SEEEKDMFLS…ITEEDSDSLL (79 aa). The segment at 143-149 is flexible linker; it reads QVDATST. The segment at 150–200 is domain III; it reads VQDQFVQEAMLALEALGYSKRELAKVEKTLNKNKYDSVDEAVKAGLQLVVS.

The protein belongs to the RuvA family. Homotetramer. Forms an RuvA(8)-RuvB(12)-Holliday junction (HJ) complex. HJ DNA is sandwiched between 2 RuvA tetramers; dsDNA enters through RuvA and exits via RuvB. An RuvB hexamer assembles on each DNA strand where it exits the tetramer. Each RuvB hexamer is contacted by two RuvA subunits (via domain III) on 2 adjacent RuvB subunits; this complex drives branch migration. In the full resolvosome a probable DNA-RuvA(4)-RuvB(12)-RuvC(2) complex forms which resolves the HJ.

It is found in the cytoplasm. Functionally, the RuvA-RuvB-RuvC complex processes Holliday junction (HJ) DNA during genetic recombination and DNA repair, while the RuvA-RuvB complex plays an important role in the rescue of blocked DNA replication forks via replication fork reversal (RFR). RuvA specifically binds to HJ cruciform DNA, conferring on it an open structure. The RuvB hexamer acts as an ATP-dependent pump, pulling dsDNA into and through the RuvAB complex. HJ branch migration allows RuvC to scan DNA until it finds its consensus sequence, where it cleaves and resolves the cruciform DNA. In Staphylococcus aureus (strain Mu3 / ATCC 700698), this protein is Holliday junction branch migration complex subunit RuvA.